Reading from the N-terminus, the 432-residue chain is Glutamyl-tRNA reductase (432 aa).

Substrate contacts are provided by residues 55 to 58 (TCNR), Ser114, 119 to 121 (ETQ), and Gln125. Catalysis depends on Cys56, which acts as the Nucleophile. 194–199 (GAGEMI) contacts NADP(+).

Belongs to the glutamyl-tRNA reductase family. Homodimer.

It catalyses the reaction (S)-4-amino-5-oxopentanoate + tRNA(Glu) + NADP(+) = L-glutamyl-tRNA(Glu) + NADPH + H(+). It functions in the pathway porphyrin-containing compound metabolism; protoporphyrin-IX biosynthesis; 5-aminolevulinate from L-glutamyl-tRNA(Glu): step 1/2. Catalyzes the NADPH-dependent reduction of glutamyl-tRNA(Glu) to glutamate 1-semialdehyde (GSA). This is Glutamyl-tRNA reductase from Burkholderia lata (strain ATCC 17760 / DSM 23089 / LMG 22485 / NCIMB 9086 / R18194 / 383).